The following is a 362-amino-acid chain: Probable dual-specificity RNA methyltransferase RlmN (362 aa).

The Proton acceptor role is filled by E91. Positions 97-329 constitute a Radical SAM core domain; sequence QHYGLSVCVT…KKNGVNCVVR (233 aa). The cysteines at positions 104 and 340 are disulfide-linked. C111, C115, and C118 together coordinate [4Fe-4S] cluster. Residues 163–164, S195, 218–220, and N296 contribute to the S-adenosyl-L-methionine site; these read GE and SLH. C340 serves as the catalytic S-methylcysteine intermediate.

The protein belongs to the radical SAM superfamily. RlmN family. [4Fe-4S] cluster serves as cofactor.

It is found in the cytoplasm. It carries out the reaction adenosine(2503) in 23S rRNA + 2 reduced [2Fe-2S]-[ferredoxin] + 2 S-adenosyl-L-methionine = 2-methyladenosine(2503) in 23S rRNA + 5'-deoxyadenosine + L-methionine + 2 oxidized [2Fe-2S]-[ferredoxin] + S-adenosyl-L-homocysteine. The catalysed reaction is adenosine(37) in tRNA + 2 reduced [2Fe-2S]-[ferredoxin] + 2 S-adenosyl-L-methionine = 2-methyladenosine(37) in tRNA + 5'-deoxyadenosine + L-methionine + 2 oxidized [2Fe-2S]-[ferredoxin] + S-adenosyl-L-homocysteine. Functionally, specifically methylates position 2 of adenine 2503 in 23S rRNA and position 2 of adenine 37 in tRNAs. This Streptococcus sanguinis (strain SK36) protein is Probable dual-specificity RNA methyltransferase RlmN.